The sequence spans 100 residues: Large ribosomal subunit protein uL23 (100 aa).

Belongs to the universal ribosomal protein uL23 family. As to quaternary structure, part of the 50S ribosomal subunit. Contacts protein L29, and trigger factor when it is bound to the ribosome.

Its function is as follows. One of the early assembly proteins it binds 23S rRNA. One of the proteins that surrounds the polypeptide exit tunnel on the outside of the ribosome. Forms the main docking site for trigger factor binding to the ribosome. This Shigella dysenteriae serotype 1 (strain Sd197) protein is Large ribosomal subunit protein uL23.